Consider the following 340-residue polypeptide: Short-chain dehydrogenase/reductase ffsI (340 aa).

L46, R71, D96, N123, Y211, and K215 together coordinate NADP(+). Y211 (proton acceptor) is an active-site residue. K215 acts as the Lowers pKa of active site Tyr in catalysis.

It belongs to the short-chain dehydrogenases/reductases (SDR) family.

It functions in the pathway mycotoxin biosynthesis. In terms of biological role, short-chain dehydrogenase/reductase; part of the gene cluster that mediates the biosynthesis of the cytotoxic leucine-containing cytochalasans, including aspochalasin C, aspochalasin E, TMC-169, flavichalasine F, aspergillin PZ, aspochalasin M and flavichalasine G. The first step in the pathway is catalyzed by the hybrid PKS-NRPS ffsA that utilizes 8 units of malonyl-CoA to iteratively assemble the octaketide chain before addition of L-leucine by the C-terminal NRPS modules. Because ffsA lacks a designated enoylreductase (ER) domain, the required activity is provided the enoyl reductase fssC. The methyltransferase (MT) domain of ffsA catalyzes the alpha-methylation at C10 and C14 using S-adenosyl-L-methionine as the methyl-donating cosubstrate. Reduction by the hydrolyase ffsE, followed by dehydration and intra-molecular Diels-Alder cyclization by the Diels-Alderase ffsF then yield the required isoindolone-fused macrocycle. A number of oxidative steps catalyzed by the tailoring cytochrome P450 monooxygenase ffsD, the FAD-linked oxidoreductase ffsJ and the short-chain dehydrogenase/reductase ffsI, are further required to afford the final products. The polypeptide is Short-chain dehydrogenase/reductase ffsI (Aspergillus flavipes).